Here is a 124-residue protein sequence, read N- to C-terminus: MPTVNQLVRFGRQSVKKKSAAPALQGNPQKRGVCVVVRTTTPKKPNSALRKIARVRLTNGIEVTAYIPGIGHNLQEHSVVLVRGGRVKDLPGVRYKIIRGALDAAGVANRKQARSRYGAKKPKK.

D89 is modified (3-methylthioaspartic acid).

This sequence belongs to the universal ribosomal protein uS12 family. As to quaternary structure, part of the 30S ribosomal subunit. Contacts proteins S8 and S17. May interact with IF1 in the 30S initiation complex.

Its function is as follows. With S4 and S5 plays an important role in translational accuracy. Interacts with and stabilizes bases of the 16S rRNA that are involved in tRNA selection in the A site and with the mRNA backbone. Located at the interface of the 30S and 50S subunits, it traverses the body of the 30S subunit contacting proteins on the other side and probably holding the rRNA structure together. The combined cluster of proteins S8, S12 and S17 appears to hold together the shoulder and platform of the 30S subunit. In Caldanaerobacter subterraneus subsp. tengcongensis (strain DSM 15242 / JCM 11007 / NBRC 100824 / MB4) (Thermoanaerobacter tengcongensis), this protein is Small ribosomal subunit protein uS12.